A 62-amino-acid polypeptide reads, in one-letter code: Cytotoxin 7 (62 aa).

An N-terminal signal peptide occupies residues 1 to 2; the sequence is YT. Disulfide bonds link Cys5–Cys23, Cys16–Cys40, Cys44–Cys55, and Cys56–Cys61.

It belongs to the three-finger toxin family. Short-chain subfamily. Type IA cytotoxin sub-subfamily. Monomer in solution; Homodimer and oligomer in the presence of negatively charged lipids forming a pore with a size ranging between 20 and 30 Angstroms. Expressed by the venom gland.

It is found in the secreted. The protein resides in the target cell membrane. Functionally, shows cytolytic activity on many different cells by forming pore in lipid membranes. In vivo, increases heart rate or kills the animal by cardiac arrest. In addition, it binds to heparin with high affinity, interacts with Kv channel-interacting protein 1 (KCNIP1) in a calcium-independent manner, and binds to integrin alpha-V/beta-3 (ITGAV/ITGB3) with moderate affinity. The sequence is that of Cytotoxin 7 from Naja sputatrix (Malayan spitting cobra).